A 429-amino-acid polypeptide reads, in one-letter code: Serine hydroxymethyltransferase (429 aa).

Residues L126 and 130-132 (GHL) each bind (6S)-5,6,7,8-tetrahydrofolate. K235 carries the N6-(pyridoxal phosphate)lysine modification. 359–361 (SPF) is a (6S)-5,6,7,8-tetrahydrofolate binding site.

The protein belongs to the SHMT family. In terms of assembly, homodimer. Pyridoxal 5'-phosphate is required as a cofactor.

It localises to the cytoplasm. The enzyme catalyses (6R)-5,10-methylene-5,6,7,8-tetrahydrofolate + glycine + H2O = (6S)-5,6,7,8-tetrahydrofolate + L-serine. The protein operates within one-carbon metabolism; tetrahydrofolate interconversion. It functions in the pathway amino-acid biosynthesis; glycine biosynthesis; glycine from L-serine: step 1/1. Its function is as follows. Catalyzes the reversible interconversion of serine and glycine with tetrahydrofolate (THF) serving as the one-carbon carrier. This reaction serves as the major source of one-carbon groups required for the biosynthesis of purines, thymidylate, methionine, and other important biomolecules. Also exhibits THF-independent aldolase activity toward beta-hydroxyamino acids, producing glycine and aldehydes, via a retro-aldol mechanism. This chain is Serine hydroxymethyltransferase, found in Prochlorococcus marinus (strain MIT 9313).